We begin with the raw amino-acid sequence, 569 residues long: 4-coumarate-CoA ligase 2 (569 aa).

Positions Met-1–Pro-24 are disordered. ATP contacts are provided by residues Ser-216–Thr-220, His-265, Ala-337–Pro-339, Gln-359–Gly-360, Thr-364, Asp-448, Arg-463, and Lys-554. The tract at residues Glu-290–Gln-359 is SBD1. The SBD2 stretch occupies residues Gly-360–Tyr-427.

Belongs to the ATP-dependent AMP-binding enzyme family. As to expression, mostly expressed in stems, and, to a lower extent, in bulbs.

It carries out the reaction (E)-4-coumarate + ATP + CoA = (E)-4-coumaroyl-CoA + AMP + diphosphate. The protein operates within phytoalexin biosynthesis; 3,4',5-trihydroxystilbene biosynthesis; 3,4',5-trihydroxystilbene from trans-4-coumarate: step 1/2. Functionally, produces CoA thioesters of a variety of hydroxy- and methoxy-substituted cinnamic acids, which are used to synthesize several phenylpropanoid-derived compounds, including anthocyanins, flavonoids, isoflavonoids, coumarins, lignin, suberin and wall-bound phenolics. This is 4-coumarate-CoA ligase 2 from Narcissus pseudonarcissus (Daffodil).